The following is a 57-amino-acid chain: Granulin-2 (57 aa).

Cystine bridges form between Cys-4–Cys-16 and Cys-10–Cys-26.

The protein belongs to the granulin family. In terms of processing, granulins are disulfide bridged. In terms of tissue distribution, ubiquitous.

Its subcellular location is the secreted. In terms of biological role, granulins have possible cytokine-like activity. They may play a role in inflammation, wound repair, and tissue remodeling. The polypeptide is Granulin-2 (Cyprinus carpio (Common carp)).